The following is a 426-amino-acid chain: Phosphoribosylamine--glycine ligase (426 aa).

Residues 109 to 312 (KEVMEAAGVA…LAGVLNAVAT (204 aa)) enclose the ATP-grasp domain. An ATP-binding site is contributed by 138–193 (LDYFGPMYVVKDDGLAAGKGVVVTADRAEARQHIHLVHAAGNPVLLESFLDGPEVS). 2 residues coordinate Mg(2+): glutamate 282 and asparagine 284.

It belongs to the GARS family. It depends on Mg(2+) as a cofactor. The cofactor is Mn(2+).

It carries out the reaction 5-phospho-beta-D-ribosylamine + glycine + ATP = N(1)-(5-phospho-beta-D-ribosyl)glycinamide + ADP + phosphate + H(+). The protein operates within purine metabolism; IMP biosynthesis via de novo pathway; N(1)-(5-phospho-D-ribosyl)glycinamide from 5-phospho-alpha-D-ribose 1-diphosphate: step 2/2. The protein is Phosphoribosylamine--glycine ligase of Corynebacterium ammoniagenes (Brevibacterium ammoniagenes).